Here is a 152-residue protein sequence, read N- to C-terminus: Pertussis toxin subunit 4 (152 aa).

The N-terminal stretch at 1–42 (MLRRFPTRTTAPGQGGARRSRVRALAWLLASGAMTHLSPALA) is a signal peptide. 2 disulfides stabilise this stretch: Cys-73-Cys-93 and Cys-145-Cys-151.

In terms of assembly, pertussis toxin contains five different chains, S1-S5. They are organized into 2 functional subunits: A, composed of S1 (which is toxic) and B, containing S2, S3, S5, and two copies of S4 (B binds to the membrane receptors). Dimers of S2-S4 and S3-S4 are held together by S5.

The protein localises to the secreted. It is found in the host cell membrane. Functionally, PTX oligomer B binds to receptors on the eukaryotic cell surface and facilitates the translocation of the toxic subunit across the cell membrane. This Bordetella parapertussis (strain 12822 / ATCC BAA-587 / NCTC 13253) protein is Pertussis toxin subunit 4 (ptxD).